Consider the following 990-residue polypeptide: Membrane alanyl aminopeptidase (990 aa).

The first 15 residues, 1–15 (FTIFLGVALLQGVLT), serve as a signal peptide directing secretion. A propeptide spans 16-35 (LSPIPVPEEEWAEFSRMLRD) (activation peptide). An N-linked (GlcNAc...) asparagine glycan is attached at N295. Residue 321-325 (GAMEN) coordinates substrate. H357 contributes to the Zn(2+) binding site. The active-site Proton acceptor is E358. Zn(2+)-binding residues include H361 and E380. Residues N609, N623, and N752 are each glycosylated (N-linked (GlcNAc...) asparagine). Residue G968 is the site of GPI-anchor amidated glycine attachment. Residues 969–990 (SGNIAALSVVSLLVTLAINMVA) constitute a propeptide, removed in mature form.

It belongs to the peptidase M1 family. It depends on Zn(2+) as a cofactor. In terms of tissue distribution, midgut brush-border membrane.

The protein localises to the cell membrane. Its function is as follows. Binds to the B.thuringiensis toxin, CryIA(C). This is Membrane alanyl aminopeptidase from Manduca sexta (Tobacco hawkmoth).